The sequence spans 238 residues: MKLRFAGTILREMLPDRWHMTAFAPTSNDRSIKVDGLKTHDNYQLLNRELAADDPWRLDGNPFERKRHAQMLLLSLAQGPIANALEVGCAAGAFTEKLAPHCQRLTVIDVVPEAIDRTRRRMNKPAHISWVVSDVQQFSSEELFDLIVVAEVLYYLGDIAEMRMAVGNLLRMLAPGGHLVFGSARDANCQRWGHVTGAETVIAILTEMLVEVERLELQGDSDNEDCLLVRFRNPVSSS.

This sequence belongs to the NodS family.

Functionally, SAM-utilizing methyltransferase involved in nod factor synthesis. In Rhizobium tropici, this protein is Nodulation protein S (nodS).